Reading from the N-terminus, the 146-residue chain is Large ribosomal subunit protein uL15 (146 aa).

The tract at residues 1-51 is disordered; sequence MQLNTIKPAEGSKKNRRHVGRGIGSGLGKTAGRGHKGQKSRSGGFHKVGFE. The span at 21–31 shows a compositional bias: gly residues; that stretch reads RGIGSGLGKTA.

Belongs to the universal ribosomal protein uL15 family. As to quaternary structure, part of the 50S ribosomal subunit.

Binds to the 23S rRNA. The protein is Large ribosomal subunit protein uL15 of Polynucleobacter necessarius subsp. necessarius (strain STIR1).